Consider the following 180-residue polypeptide: Adenine phosphoribosyltransferase (180 aa).

Belongs to the purine/pyrimidine phosphoribosyltransferase family. Homodimer.

The protein localises to the cytoplasm. The catalysed reaction is AMP + diphosphate = 5-phospho-alpha-D-ribose 1-diphosphate + adenine. It functions in the pathway purine metabolism; AMP biosynthesis via salvage pathway; AMP from adenine: step 1/1. In terms of biological role, catalyzes a salvage reaction resulting in the formation of AMP, that is energically less costly than de novo synthesis. In Rhizobium meliloti (strain 1021) (Ensifer meliloti), this protein is Adenine phosphoribosyltransferase.